The primary structure comprises 142 residues: NTF2-related export protein 2 (142 aa).

One can recognise an NTF2 domain in the interval 17-136; sequence AAEEFVNIYY…WKIASDCFRF (120 aa).

Associates with NXF1, NXF2, NXF3 and NXF5.

It localises to the nucleus. The protein resides in the cytoplasm. Its function is as follows. Regulator of protein export for NES-containing proteins. Also plays a role in mRNA nuclear export. The chain is NTF2-related export protein 2 from Homo sapiens (Human).